We begin with the raw amino-acid sequence, 283 residues long: Protein MGARP (283 aa).

Residues 1-36 (MYLRRAVSKTLALPRRAPPGPAPLGKDASLRRMSSR) form a disordered region. Residues 1 to 41 (MYLRRAVSKTLALPRRAPPGPAPLGKDASLRRMSSRKFPGT) lie on the Cytoplasmic side of the membrane. A helical; Anchor for type IV membrane protein membrane pass occupies residues 42-64 (SGSNMIYYLVVGVTVSAGGYYTY). The Mitochondrial intermembrane segment spans residues 65 to 283 (KALTSKQVRR…VTEETASPQG (219 aa)). Disordered regions lie at residues 78–101 (VAEP…EHVA) and 118–283 (AESV…SPQG). Residues 128 to 160 (EAAVVLPEESQASAPSEVPAEAAVVEASLSSSE) are compositionally biased toward low complexity. 2 stretches are compositionally biased toward polar residues: residues 171-184 (VETT…TQEV) and 199-220 (ADTS…QEGA). The segment covering 221–245 (DTTKEEADNSKEAEGTTTEDPRSIS) has biased composition (basic and acidic residues).

In terms of assembly, interacts with RHOT1/Miro-1, RHOT2/Miro-2, TRAK1/OIP106 and TRAK2/GRIF1. Expressed in the ovary, testis, brain, adrenal glands and the compartments of the visual nervous system. Expressed in corneal endothelium (CE) (at protein level). Expressed in steroidogenic tissues with the highest level of expression observed in the adrenal gland. Weakly expressed in placenta. Weakly expressed in astrocytes and neurons under normoxia. Strongly expressed in astrocytes and neurons under hypoxia. Expressed in each layer of the retina, with particularly higher staining in the inner segment of the photoreceptor (IS), the outer plexiform layer (OPL) and the ganglion cell layer (GCL).

It is found in the mitochondrion. It localises to the mitochondrion outer membrane. The protein resides in the mitochondrion inner membrane. In terms of biological role, plays a role in the trafficking of mitochondria along microtubules. Regulates the kinesin-mediated axonal transport of mitochondria to nerve terminals along microtubules during hypoxia. Participates in the translocation of TRAK2/GRIF1 from the cytoplasm to the mitochondrion. Also plays a role in steroidogenesis through maintenance of mitochondrial abundance and morphology. Plays an inhibitory role during neocortex development by regulating mitochondrial morphology, distribution and motility in neocortical neurons. The sequence is that of Protein MGARP (Mgarp) from Mus musculus (Mouse).